The sequence spans 72 residues: Galensin (72 aa).

The signal sequence occupies residues 1 to 22 (MLTLKKSMLLLFFLGLVSVSLA). Positions 23 to 48 (DDKREDEAEEGEDKRAAEEERNVEKR) are excised as a propeptide. Phe-71 carries the phenylalanine amide modification.

Belongs to the frog skin active peptide (FSAP) family. Brevinin subfamily. Homodimer; disulfide-linked. Expressed by the skin glands.

It is found in the secreted. Antibacterial activity against the Gram-positive bacterium M.luteus and the Gram-negative bacterium E.coli. This is Galensin from Kassina senegalensis (Senegal running frog).